We begin with the raw amino-acid sequence, 802 residues long: Ras GTPase-activating protein 4 (802 aa).

2 consecutive C2 domains span residues 1–105 (MAKR…SGWT) and 116–232 (VQGE…EGWF). Ca(2+) contacts are provided by Asp-21, Asp-27, Asp-74, Asp-76, Ser-79, Asp-82, Asp-149, Asp-155, Asp-202, Asp-204, Ser-207, and Asp-210. The Ras-GAP domain occupies 317–545 (GLAKDFLDLL…AQLKDFIMKL (229 aa)). In terms of domain architecture, PH spans 565-672 (PPVKEGPLFI…WLSALRKAST (108 aa)). The segment at 674-710 (NRGLLRSYHPGIFRGDKWSCCHQKDKTDQGCDKTHSR) adopts a Btk-type zinc-finger fold. Zn(2+) is bound by residues His-682, Cys-693, Cys-694, and Cys-704.

The cofactor is Ca(2+). In terms of tissue distribution, isoform 2 is expressed in osteoblasts.

It localises to the cytoplasm. The protein localises to the cytosol. Its subcellular location is the cell membrane. In terms of biological role, ca(2+)-dependent Ras GTPase-activating protein, that switches off the Ras-MAPK pathway following a stimulus that elevates intracellular calcium. Functions as an adaptor for Cdc42 and Rac1 during FcR-mediated phagocytosis. Isoform 2 activates the Ras pathway and promotes RANKL shedding by modulating the expression of MMP14. This Mus musculus (Mouse) protein is Ras GTPase-activating protein 4 (Rasa4).